A 206-amino-acid polypeptide reads, in one-letter code: MAEAVAQPVETVAHTFAPKLFNKWSYDVTVSDISLKELLAINSKLKYQVFLPHTAGRYQIKPFRKIQCPIVERLVCCMMQHGKNSGKKLLAMRVVEESFEIIHLLTEKNPIQVLVDAIINASPREDSTRVGTGGNAKRQAVDVSPLRRINQALYLMTMGCRSAAFRNSKTLAECLADEIVNASKSNTASFAIKKKEDMERVAKSNR.

It belongs to the universal ribosomal protein uS7 family. Component of the small ribosomal subunit.

The protein resides in the cytoplasm. Functionally, component of the small ribosomal subunit. The ribosome is a large ribonucleoprotein complex responsible for the synthesis of proteins in the cell. This Entamoeba histolytica (strain ATCC 30459 / HM-1:IMSS / ABRM) protein is Small ribosomal subunit protein uS7.